The chain runs to 423 residues: UDP-N-acetylglucosamine 1-carboxyvinyltransferase (423 aa).

Position 22-23 (22-23 (KN)) interacts with phosphoenolpyruvate. Arginine 93 serves as a coordination point for UDP-N-acetyl-alpha-D-glucosamine. Cysteine 117 serves as the catalytic Proton donor. Cysteine 117 carries the post-translational modification 2-(S-cysteinyl)pyruvic acid O-phosphothioketal. Residues 122-126 (RPIDL), aspartate 307, and valine 329 contribute to the UDP-N-acetyl-alpha-D-glucosamine site.

Belongs to the EPSP synthase family. MurA subfamily.

It localises to the cytoplasm. It catalyses the reaction phosphoenolpyruvate + UDP-N-acetyl-alpha-D-glucosamine = UDP-N-acetyl-3-O-(1-carboxyvinyl)-alpha-D-glucosamine + phosphate. The protein operates within cell wall biogenesis; peptidoglycan biosynthesis. In terms of biological role, cell wall formation. Adds enolpyruvyl to UDP-N-acetylglucosamine. The polypeptide is UDP-N-acetylglucosamine 1-carboxyvinyltransferase (Chlorobium chlorochromatii (strain CaD3)).